A 126-amino-acid chain; its full sequence is Nitrogenase-stabilizing/protective protein NifW (126 aa).

The segment at 104-126 (VPMSEITVERPATTQTDEKGQQR) is disordered.

Belongs to the NifW family. In terms of assembly, homotrimer; associates with NifD.

Functionally, may protect the nitrogenase Fe-Mo protein from oxidative damage. In Parafrankia sp. (strain EAN1pec), this protein is Nitrogenase-stabilizing/protective protein NifW.